Here is a 131-residue protein sequence, read N- to C-terminus: Insulin-like 3 (131 aa).

A signal peptide spans 1–26; that stretch reads MDPHPLTWALVLLGPALALSRAPAPA. Disulfide bonds link cysteine 34–cysteine 116, cysteine 46–cysteine 129, and cysteine 115–cysteine 120. Residues 58–103 constitute a propeptide, c peptide like; it reads AVAGGDRELLQWLEGQHLFHGLMASGDPMLVLAPQPPPQASGHHHH.

It belongs to the insulin family. As to quaternary structure, heterodimer of a B chain and an A chain linked by two disulfide bonds. In terms of tissue distribution, expressed exclusively in prenatal and postnatal Leydig cells.

The protein resides in the secreted. Functionally, seems to play a role in testicular function. May be a trophic hormone with a role in testicular descent in fetal life. Is a ligand for LGR8 receptor. The protein is Insulin-like 3 (INSL3) of Sus scrofa (Pig).